A 252-amino-acid polypeptide reads, in one-letter code: Imidazole glycerol phosphate synthase subunit HisF (252 aa).

Catalysis depends on residues D11 and D130.

This sequence belongs to the HisA/HisF family. As to quaternary structure, heterodimer of HisH and HisF.

It localises to the cytoplasm. It catalyses the reaction 5-[(5-phospho-1-deoxy-D-ribulos-1-ylimino)methylamino]-1-(5-phospho-beta-D-ribosyl)imidazole-4-carboxamide + L-glutamine = D-erythro-1-(imidazol-4-yl)glycerol 3-phosphate + 5-amino-1-(5-phospho-beta-D-ribosyl)imidazole-4-carboxamide + L-glutamate + H(+). Its pathway is amino-acid biosynthesis; L-histidine biosynthesis; L-histidine from 5-phospho-alpha-D-ribose 1-diphosphate: step 5/9. Functionally, IGPS catalyzes the conversion of PRFAR and glutamine to IGP, AICAR and glutamate. The HisF subunit catalyzes the cyclization activity that produces IGP and AICAR from PRFAR using the ammonia provided by the HisH subunit. The protein is Imidazole glycerol phosphate synthase subunit HisF of Thermococcus onnurineus (strain NA1).